The following is a 186-amino-acid chain: Nicotinamide-nucleotide adenylyltransferase (186 aa).

It belongs to the archaeal NMN adenylyltransferase family.

The protein resides in the cytoplasm. It carries out the reaction beta-nicotinamide D-ribonucleotide + ATP + H(+) = diphosphate + NAD(+). Its pathway is cofactor biosynthesis; NAD(+) biosynthesis; NAD(+) from nicotinamide D-ribonucleotide: step 1/1. The chain is Nicotinamide-nucleotide adenylyltransferase from Thermococcus sibiricus (strain DSM 12597 / MM 739).